We begin with the raw amino-acid sequence, 188 residues long: Acireductone dioxygenase (188 aa).

Fe(2+)-binding residues include H97, H99, E103, and H141. 4 residues coordinate Ni(2+): H97, H99, E103, and H141.

Belongs to the acireductone dioxygenase (ARD) family. Monomer. Fe(2+) is required as a cofactor. The cofactor is Ni(2+).

The catalysed reaction is 1,2-dihydroxy-5-(methylsulfanyl)pent-1-en-3-one + O2 = 3-(methylsulfanyl)propanoate + CO + formate + 2 H(+). The enzyme catalyses 1,2-dihydroxy-5-(methylsulfanyl)pent-1-en-3-one + O2 = 4-methylsulfanyl-2-oxobutanoate + formate + 2 H(+). It participates in amino-acid biosynthesis; L-methionine biosynthesis via salvage pathway; L-methionine from S-methyl-5-thio-alpha-D-ribose 1-phosphate: step 5/6. In terms of biological role, catalyzes 2 different reactions between oxygen and the acireductone 1,2-dihydroxy-3-keto-5-methylthiopentene (DHK-MTPene) depending upon the metal bound in the active site. Fe-containing acireductone dioxygenase (Fe-ARD) produces formate and 2-keto-4-methylthiobutyrate (KMTB), the alpha-ketoacid precursor of methionine in the methionine recycle pathway. Ni-containing acireductone dioxygenase (Ni-ARD) produces methylthiopropionate, carbon monoxide and formate, and does not lie on the methionine recycle pathway. The chain is Acireductone dioxygenase from Xylella fastidiosa (strain M23).